Here is a 265-residue protein sequence, read N- to C-terminus: Arginine and glutamate-rich protein 1 (265 aa).

Basic residues predominate over residues 1–54; sequence MGRSRSRSSSRSKHAKSGKHNKKRSRSREKERVRKRSKSRESKRNRRRESRSRS. A necessary and sufficient for RNA binding region spans residues 1-66; sequence MGRSRSRSSS…NTASRRERER (66 aa). Positions 1–106 are disordered; it reads MGRSRSRSSS…EKKAEYERQR (106 aa). 2 stretches are compositionally biased toward basic and acidic residues: residues 60 to 76 and 85 to 106; these read SRRE…RIDI and SSLD…ERQR. The interval 67 to 265 is necessary and sufficient for transcriptional regulation; the sequence is AASPPDRIDI…KLSFSLKSPD (199 aa). The short motif at 164-168 is the LXXLL motif 1; degenerate element; it reads LLEEL. Positions 193 to 197 match the LXXLL motif 2; degenerate motif; that stretch reads LERIL. Basic and acidic residues predominate over residues 229–245; it reads RMKLEQERQRQQKEEQK. Residues 229–265 form a disordered region; that stretch reads RMKLEQERQRQQKEEQKIILGKGKSRPKLSFSLKSPD.

Belongs to the ARGLU1 family.

It is found in the nucleus. Its subcellular location is the nucleus speckle. The protein resides in the chromosome. Functionally, dual function regulator of gene expression; regulator of transcription and modulator of alternative splicing. General coactivator of nuclear receptor-induced gene expression. The chain is Arginine and glutamate-rich protein 1 (arglu1) from Xenopus tropicalis (Western clawed frog).